The chain runs to 350 residues: Ceramide synthase 1 (350 aa).

An N-acetylalanine modification is found at Ala2. The next 6 helical transmembrane spans lie at 53–73 (AHLA…WTAL), 103–123 (AWKF…LFGT), 148–168 (IAAA…ATLY), 176–196 (SVVM…SYAF), 239–259 (AADL…LYWF), and 287–307 (LLLL…AFAA). Residues 97–311 (AKMPESAWKF…IVAFAAKVLT (215 aa)) enclose the TLC domain.

In terms of processing, acetylated. Deacetylation by SIRT3 increases enzyme activity and promotes mitochondrial ceramide accumulation.

Its subcellular location is the endoplasmic reticulum membrane. The catalysed reaction is a sphingoid base + octadecanoyl-CoA = an N-octadecanoyl-sphingoid base + CoA + H(+). The enzyme catalyses sphinganine + octadecanoyl-CoA = N-(octadecanoyl)-sphinganine + CoA + H(+). It catalyses the reaction hexadecasphinganine + octadecanoyl-CoA = N-octadecanoylhexadecasphinganine + CoA + H(+). It carries out the reaction sphing-4-enine + octadecanoyl-CoA = N-octadecanoylsphing-4-enine + CoA + H(+). The catalysed reaction is heptadecasphing-4-enine + octadecanoyl-CoA = N-octadecanoyl-heptadecasphing-4-enine + CoA + H(+). The enzyme catalyses 2-hydroxyoctadecanoyl-CoA + sphinganine = N-(2-hydroxyoctadecanoyl)-sphinganine + CoA + H(+). It catalyses the reaction eicosanoyl-CoA + sphinganine = N-eicosanoylsphinganine + CoA + H(+). It functions in the pathway lipid metabolism; sphingolipid metabolism. With respect to regulation, inhibited by fumonisin B1. In terms of biological role, ceramide synthase that catalyzes the transfer of the acyl chain from acyl-CoA to a sphingoid base, with high selectivity toward stearoyl-CoA (octadecanoyl-CoA; C18:0-CoA). N-acylates sphinganine and sphingosine bases to form dihydroceramides and ceramides in de novo synthesis and salvage pathways, respectively. Plays a predominant role in skeletal muscle in regulating C18 ceramide and dihydroceramide levels with an impact on whole-body glucose metabolism and insulin sensitivity. Protects from diet-induced obesity by suppressing the uptake of glucose in multiple organs in a FGF21-dependent way. Generates C18 ceramides in the brain, playing a critical role in cerebellar development and Purkinje cell function. In response to cellular stress mediates mitophagy, a known defense mechanism against cell transformation and aging. Upon mitochondria fission, generates C18 ceramides that anchor lipidated MAP1LC3B/LC3B-II autophagolysosomes to outer mitochondrial membranes to eliminate damaged mitochondria. In Homo sapiens (Human), this protein is Ceramide synthase 1.